The chain runs to 176 residues: Co-chaperone protein HscB homolog (176 aa).

A J domain is found at 7 to 79 (THFSLFGLPE…LKRATYLLHL (73 aa)).

Belongs to the HscB family. In terms of assembly, interacts with HscA and stimulates its ATPase activity.

Its function is as follows. Co-chaperone involved in the maturation of iron-sulfur cluster-containing proteins. Seems to help targeting proteins to be folded toward HscA. The sequence is that of Co-chaperone protein HscB homolog from Ralstonia nicotianae (strain ATCC BAA-1114 / GMI1000) (Ralstonia solanacearum).